A 113-amino-acid polypeptide reads, in one-letter code: Small ribosomal subunit protein uS15 (113 aa).

The protein belongs to the universal ribosomal protein uS15 family. In terms of assembly, part of the 30S ribosomal subunit. Forms a bridge to the 50S subunit in the 70S ribosome, contacting the 23S rRNA.

Functionally, one of the primary rRNA binding proteins, it binds directly to 16S rRNA where it helps nucleate assembly of the platform of the 30S subunit by binding and bridging several RNA helices of the 16S rRNA. Forms an intersubunit bridge (bridge B4) with the 23S rRNA of the 50S subunit in the ribosome. The polypeptide is Small ribosomal subunit protein uS15 (Haemophilus influenzae (strain PittEE)).